Reading from the N-terminus, the 217-residue chain is 3,4-dihydroxy-2-butanone 4-phosphate synthase (217 aa).

D-ribulose 5-phosphate-binding positions include 37–38 (RE), Asp-42, 150–154 (RGGHT), and Glu-174. A Mg(2+)-binding site is contributed by Glu-38. Residue His-153 coordinates Mg(2+).

The protein belongs to the DHBP synthase family. In terms of assembly, homodimer. It depends on Mg(2+) as a cofactor. The cofactor is Mn(2+).

The catalysed reaction is D-ribulose 5-phosphate = (2S)-2-hydroxy-3-oxobutyl phosphate + formate + H(+). The protein operates within cofactor biosynthesis; riboflavin biosynthesis; 2-hydroxy-3-oxobutyl phosphate from D-ribulose 5-phosphate: step 1/1. Functionally, catalyzes the conversion of D-ribulose 5-phosphate to formate and 3,4-dihydroxy-2-butanone 4-phosphate. The sequence is that of 3,4-dihydroxy-2-butanone 4-phosphate synthase from Citrobacter koseri (strain ATCC BAA-895 / CDC 4225-83 / SGSC4696).